Here is a 445-residue protein sequence, read N- to C-terminus: Tubby-like F-box protein 14 (445 aa).

In terms of domain architecture, F-box spans 56-114 (SSCWANLPPELLRDVIERLEASEAAWPSRKNVVACAAVCRTWRDMCREIVKNPEFCGKI).

This sequence belongs to the TUB family. In terms of tissue distribution, ubiquitous.

In Oryza sativa subsp. japonica (Rice), this protein is Tubby-like F-box protein 14 (TULP14).